The primary structure comprises 89 residues: Small ribosomal subunit protein uS15 (89 aa).

The protein belongs to the universal ribosomal protein uS15 family. As to quaternary structure, part of the 30S ribosomal subunit. Forms a bridge to the 50S subunit in the 70S ribosome, contacting the 23S rRNA.

Its function is as follows. One of the primary rRNA binding proteins, it binds directly to 16S rRNA where it helps nucleate assembly of the platform of the 30S subunit by binding and bridging several RNA helices of the 16S rRNA. Forms an intersubunit bridge (bridge B4) with the 23S rRNA of the 50S subunit in the ribosome. The chain is Small ribosomal subunit protein uS15 from Rhizorhabdus wittichii (strain DSM 6014 / CCUG 31198 / JCM 15750 / NBRC 105917 / EY 4224 / RW1) (Sphingomonas wittichii).